The primary structure comprises 130 residues: Small ribosomal subunit protein uS8 (130 aa).

It belongs to the universal ribosomal protein uS8 family. In terms of assembly, part of the 30S ribosomal subunit. Contacts proteins S5 and S12.

In terms of biological role, one of the primary rRNA binding proteins, it binds directly to 16S rRNA central domain where it helps coordinate assembly of the platform of the 30S subunit. The chain is Small ribosomal subunit protein uS8 from Wigglesworthia glossinidia brevipalpis.